A 218-amino-acid chain; its full sequence is Adenylate kinase (218 aa).

10–15 (GAGKGT) is an ATP binding site. The segment at 30–59 (STGDMLRAAVKAGTPLGQQAKAVMDAGKLV) is NMP. AMP contacts are provided by residues Thr31, Arg36, 57–59 (KLV), 85–88 (GFPR), and Gln92. The LID stretch occupies residues 122–159 (GRRSHPASGRTYHVKFNPPKVEGKDDVTGEDLIQREDD). ATP-binding positions include Arg123 and 132–133 (TY). The tract at residues 127 to 147 (PASGRTYHVKFNPPKVEGKDD) is disordered. Arg156 and Arg167 together coordinate AMP. Gly203 contacts ATP.

The protein belongs to the adenylate kinase family. Monomer.

The protein localises to the cytoplasm. The enzyme catalyses AMP + ATP = 2 ADP. The protein operates within purine metabolism; AMP biosynthesis via salvage pathway; AMP from ADP: step 1/1. Functionally, catalyzes the reversible transfer of the terminal phosphate group between ATP and AMP. Plays an important role in cellular energy homeostasis and in adenine nucleotide metabolism. This is Adenylate kinase from Paracidovorax citrulli (strain AAC00-1) (Acidovorax citrulli).